Reading from the N-terminus, the 99-residue chain is (4S)-4-hydroxy-5-phosphonooxypentane-2,3-dione isomerase (99 aa).

The 90-residue stretch at 2–91 (HVTLVEINVK…ISEPRKKRSF (90 aa)) folds into the ABM domain.

It belongs to the LsrG family. Homodimer.

Its subcellular location is the cytoplasm. The enzyme catalyses (2S)-2-hydroxy-3,4-dioxopentyl phosphate = 3-hydroxy-2,4-dioxopentyl phosphate. Involved in the degradation of phospho-AI-2, thereby terminating induction of the lsr operon and closing the AI-2 signaling cycle. Catalyzes the conversion of (4S)-4-hydroxy-5-phosphonooxypentane-2,3-dione (P-DPD) to 3-hydroxy-5-phosphonooxypentane-2,4-dione (P-HPD). The polypeptide is (4S)-4-hydroxy-5-phosphonooxypentane-2,3-dione isomerase (Photorhabdus laumondii subsp. laumondii (strain DSM 15139 / CIP 105565 / TT01) (Photorhabdus luminescens subsp. laumondii)).